We begin with the raw amino-acid sequence, 385 residues long: Nonsense-mediated mRNA decay factor SMG9 (385 aa).

Positions 1–32 are disordered; that stretch reads MKKVEILKTSRPSSAGGAARPSTASPTHGAPK.

The protein belongs to the SMG9 family.

In terms of biological role, involved in nonsense-mediated decay (NMD) of mRNAs containing premature stop codons. Probable component of kinase complex containing smg-1 and recruited to stalled ribosomes. The sequence is that of Nonsense-mediated mRNA decay factor SMG9 (smg-9) from Caenorhabditis elegans.